The primary structure comprises 302 residues: Elongation factor Ts (302 aa).

The interval threonine 80–valine 83 is involved in Mg(2+) ion dislocation from EF-Tu.

It belongs to the EF-Ts family.

It is found in the cytoplasm. In terms of biological role, associates with the EF-Tu.GDP complex and induces the exchange of GDP to GTP. It remains bound to the aminoacyl-tRNA.EF-Tu.GTP complex up to the GTP hydrolysis stage on the ribosome. The polypeptide is Elongation factor Ts (Gluconobacter oxydans (strain 621H) (Gluconobacter suboxydans)).